We begin with the raw amino-acid sequence, 737 residues long: Prospero homeobox protein 1 (737 aa).

The segment at 1–28 is interaction with RORG; that stretch reads MPDHDSTALLSRQTKRRRVDIGVKRTVG. A compositionally biased stretch (polar residues) spans 103 to 135; that stretch reads KNGGTEPSFQASGLSSTGSEVHQEDICSNSSRD. The interval 103–147 is disordered; that stretch reads KNGGTEPSFQASGLSSTGSEVHQEDICSNSSRDSPPECLSPFGRP. A phosphoserine mark is found at S177, S179, S199, S291, and S295. The segment at 178–221 is disordered; the sequence is HSPSVALRGNENEREMAPQSVSPRESYRENKRKQKLPQQQQQSF. The span at 320–337 shows a compositional bias: basic and acidic residues; the sequence is MAENKPKREGSNKERDHG. Disordered regions lie at residues 320-344 and 444-476; these read MAEN…LQPE and RKNS…AGFT. K324 participates in a covalent cross-link: Glycyl lysine isopeptide (Lys-Gly) (interchain with G-Cter in SUMO2). The segment covering 464-476 has biased composition (polar residues); the sequence is LHQSPLSATAGFT. S511 and S514 each carry phosphoserine. Residues 525 to 547 form a disordered region; it reads RTKMSSHHLSHHPCSPAHPPSTA. The residue at position 557 (S557) is a Phosphoserine. Residues 577–635 form the Prospero-type homeo domain; it reads QEGLSPNHLKKAKLMFFYTRYPSSNMLKTYFSDVKFNRCITSQLIKWFSNFREFYYIQM. A homeo-Prospero region spans residues 577-735; that stretch reads QEGLSPNHLK…KSPNCLQELL (159 aa). The Prospero domain occupies 636–735; sequence EKYARQAIND…KSPNCLQELL (100 aa). The segment at 723-729 is essential for nuclear localization, interaction with RORG, repression of RORG transcriptional activator activity; the sequence is EIFKSPN.

It belongs to the Prospero homeodomain family. As to quaternary structure, interacts with RORA and RORG (via AF-2 motif). As to expression, expressed in the young neurons of the subventricular region of the CNS, developing eye lens and pancreas. It is also found in the developing liver, heart and skeletal muscle. In the eye, expressed in the lens and retina at postnatal day 10. In the retina, localized to the inner nuclear layer. In the lens, localized to epithelial and fiber cells.

It localises to the nucleus. In terms of biological role, transcription factor involved in developmental processes such as cell fate determination, gene transcriptional regulation and progenitor cell regulation in a number of organs. Plays a critical role in embryonic development and functions as a key regulatory protein in neurogenesis and the development of the heart, eye lens, liver, pancreas and the lymphatic system. Involved in the regulation of the circadian rhythm. Represses: transcription of the retinoid-related orphan receptor RORG, transcriptional activator activity of RORA and RORG and the expression of RORA/G-target genes including core clock components: BMAL1, NPAS2 and CRY1 and metabolic genes: AVPR1A and ELOVL3. The protein is Prospero homeobox protein 1 (Prox1) of Mus musculus (Mouse).